A 228-amino-acid polypeptide reads, in one-letter code: Histidine/lysine/arginine/ornithine transport system permease protein HisQ (228 aa).

The Periplasmic segment spans residues 1 to 12 (MLYGFSGVILQG). A helical transmembrane segment spans residues 13–33 (ALVTLELAISSVVLAVIIGLI). The 200-residue stretch at 13-212 (ALVTLELAIS…VFTTVSNGVL (200 aa)) folds into the ABC transmembrane type-1 domain. The Cytoplasmic portion of the chain corresponds to 34-58 (GAGGKLSQNRLSGLIFEGYTTLIRG). The chain crosses the membrane as a helical span at residues 59-79 (VPDLVLMLLIFYGLQIALNTV). Residues 80 to 87 (TEAMGVGQ) are Periplasmic-facing. The helical transmembrane segment at 88–108 (IDIDPMVAGIITLGFIYGAYF) threads the bilayer. The Cytoplasmic portion of the chain corresponds to 109–148 (TETFRGAFMAVPKGHIEAATAFGFTRGQVFRRIMFPSMMR). Residues 149 to 171 (YALPGIGNNWQVILKSTALVSLL) form a helical membrane-spanning segment. Topologically, residues 172 to 194 (GLEDVVKATQLAGKSTWEPFYFA) are periplasmic. A helical membrane pass occupies residues 195–215 (IVCGVIYLVFTTVSNGVLLFL). Topologically, residues 216–228 (ERRYSVGVKRADL) are cytoplasmic.

The protein belongs to the binding-protein-dependent transport system permease family. HisMQ subfamily. The HisPMQJ complex is composed of two ATP-binding proteins (HisP), two transmembrane proteins (HisM and HisQ) and a solute-binding protein (HisJ). The HisPMQ-ArgT complex is composed of two ATP-binding proteins (HisP), two transmembrane proteins (HisM and HisQ) and a solute-binding protein (ArgT).

It localises to the cell inner membrane. In terms of biological role, part of the ABC transporter complex HisPMQJ involved in histidine transport. Is also part of the ABC transporter complex HisPMQ-ArgT involved in lysine/arginine/ornithine transport. Probably responsible for the translocation of the substrate across the membrane. This chain is Histidine/lysine/arginine/ornithine transport system permease protein HisQ (hisQ), found in Escherichia coli (strain K12).